The following is a 215-amino-acid chain: LexA repressor (215 aa).

A DNA-binding region (H-T-H motif) is located at residues 28 to 48 (RAEIAAELGFSSPNAAEEHLR). Active-site for autocatalytic cleavage activity residues include S133 and K170.

Belongs to the peptidase S24 family. As to quaternary structure, homodimer.

It carries out the reaction Hydrolysis of Ala-|-Gly bond in repressor LexA.. In terms of biological role, represses a number of genes involved in the response to DNA damage (SOS response), including recA and lexA. In the presence of single-stranded DNA, RecA interacts with LexA causing an autocatalytic cleavage which disrupts the DNA-binding part of LexA, leading to derepression of the SOS regulon and eventually DNA repair. This Burkholderia cenocepacia (strain ATCC BAA-245 / DSM 16553 / LMG 16656 / NCTC 13227 / J2315 / CF5610) (Burkholderia cepacia (strain J2315)) protein is LexA repressor.